A 470-amino-acid chain; its full sequence is ATP synthase subunit beta (470 aa).

Residue Gly-155–Thr-162 participates in ATP binding.

Belongs to the ATPase alpha/beta chains family. As to quaternary structure, F-type ATPases have 2 components, CF(1) - the catalytic core - and CF(0) - the membrane proton channel. CF(1) has five subunits: alpha(3), beta(3), gamma(1), delta(1), epsilon(1). CF(0) has three main subunits: a(1), b(2) and c(9-12). The alpha and beta chains form an alternating ring which encloses part of the gamma chain. CF(1) is attached to CF(0) by a central stalk formed by the gamma and epsilon chains, while a peripheral stalk is formed by the delta and b chains.

Its subcellular location is the cell membrane. The catalysed reaction is ATP + H2O + 4 H(+)(in) = ADP + phosphate + 5 H(+)(out). Produces ATP from ADP in the presence of a proton gradient across the membrane. The catalytic sites are hosted primarily by the beta subunits. The sequence is that of ATP synthase subunit beta from Lacticaseibacillus casei (Lactobacillus casei).